A 244-amino-acid polypeptide reads, in one-letter code: 5-oxoprolinase subunit A (244 aa).

This sequence belongs to the LamB/PxpA family. As to quaternary structure, forms a complex composed of PxpA, PxpB and PxpC.

It catalyses the reaction 5-oxo-L-proline + ATP + 2 H2O = L-glutamate + ADP + phosphate + H(+). Catalyzes the cleavage of 5-oxoproline to form L-glutamate coupled to the hydrolysis of ATP to ADP and inorganic phosphate. The sequence is that of 5-oxoprolinase subunit A from Escherichia coli O7:K1 (strain IAI39 / ExPEC).